Reading from the N-terminus, the 304-residue chain is Glucose-6-phosphate isomerase (304 aa).

Catalysis depends on glutamate 146, which acts as the Proton donor. The active site involves histidine 177.

This sequence belongs to the GPI family.

It is found in the cytoplasm. It catalyses the reaction alpha-D-glucose 6-phosphate = beta-D-fructose 6-phosphate. Its pathway is carbohydrate degradation; glycolysis; D-glyceraldehyde 3-phosphate and glycerone phosphate from D-glucose: step 2/4. The sequence is that of Glucose-6-phosphate isomerase (PGI) from Calanus finmarchicus (Calanus tonsus).